Reading from the N-terminus, the 634-residue chain is Sodium-dependent neutral amino acid transporter B(0)AT1 (634 aa).

At 1–41 (MVRLVLPNPGLDTRILSLAELETIEQEEASSRPKWDNKAQY) the chain is on the cytoplasmic side. Position 17 is a phosphoserine (Ser-17). Residues 42 to 62 (LLTCVGFCVGLGNVWRFPYLC) traverse the membrane as a helical segment. Residues 63 to 65 (QSH) are Extracellular-facing. The chain crosses the membrane as a helical span at residues 66–86 (GGGAFMIPFLILLVLEGIPLL). Topologically, residues 87-120 (HLEFAIGQRLRRGSLGVWSSIHPALKGVGLTSML) are cytoplasmic. A helical membrane pass occupies residues 121 to 141 (VSFVVGLYYNTIISWIMWYLF). Residues 142–192 (NSFQEPLPWSECPLNENQTGYVDECARSSPVDYFWYRETLNISTSISDSGS) lie on the Extracellular side of the membrane. Residues Asn-158 and Asn-182 are each glycosylated (N-linked (GlcNAc...) asparagine). The chain crosses the membrane as a helical span at residues 193–213 (IQWRMLLCLACAWSVLYMCTI). Residues 214–221 (RGIETTGK) lie on the Cytoplasmic side of the membrane. The helical transmembrane segment at 222–242 (VVYITSTLPYVVLTIFLIRGL) threads the bilayer. At 243 to 268 (TLKGATKGIIYLFTPNVTELANPVTW) the chain is on the extracellular side. Residue Asn-258 is glycosylated (N-linked (GlcNAc...) asparagine). A helical transmembrane segment spans residues 269–289 (LDAGAQVFFSFSLAFGGLISF). Residues 290 to 304 (SSYNSVHNNCERDSV) are Cytoplasmic-facing. A helical transmembrane segment spans residues 305-325 (IVSIINGFTSVYVAIVIYSII). The Extracellular segment spans residues 326–413 (GFRATQRYDD…TEAITKMPVS (88 aa)). N-linked (GlcNAc...) asparagine glycosylation is found at Asn-354 and Asn-368. The helical transmembrane segment at 414 to 434 (PLWSVLFFIMLFCLGLSSMFG) threads the bilayer. The Cytoplasmic segment spans residues 435-456 (NMEGVVVPLQDLKVIPPKWPKE). The helical transmembrane segment at 457 to 477 (LLTGLICLGTFLIGFIFTLNS) threads the bilayer. The Extracellular portion of the chain corresponds to 478-487 (GQYWLSLLDS). A helical transmembrane segment spans residues 488–508 (YAVSIPLLIIAFCEMFSVVYV). The Cytoplasmic portion of the chain corresponds to 509–531 (YGVDRFNKDIEFMIGHKPNIFWQ). Residues 532-552 (VTWRVVSPLLMLIILVFFFVV) traverse the membrane as a helical segment. At 553–581 (QVSQELTYSIWNPGYEEFPKSQKISHPNW) the chain is on the extracellular side. A helical transmembrane segment spans residues 582 to 602 (VYAVVVIVAGVPSLTIPSYAI). Over 603-634 (YKLIRNCCQKPGDRQGLVSTLSTASMNGDLKY) the chain is Cytoplasmic. The residue at position 627 (Ser-627) is a Phosphoserine.

This sequence belongs to the sodium:neurotransmitter symporter (SNF) (TC 2.A.22) family. SLC6A19 subfamily. As to quaternary structure, interacts in a tissue-specific manner with ACE2 in small intestine and with CLTRN in the kidney. Interacts with CLTRN; this interaction is required for trafficking of SLC6A19 to the plasma membrane and for its catalytic activation in kidneys. Interacts with ACE2; this interaction is required for trafficking of SLC6A19 to the plasma membrane and for its catalytic activation in intestine. Interacts with ANPEP; the interaction positively regulates its amino acid transporter activity.

The protein resides in the membrane. The enzyme catalyses L-alanine(in) + Na(+)(in) = L-alanine(out) + Na(+)(out). It carries out the reaction L-cysteine(in) + Na(+)(in) = L-cysteine(out) + Na(+)(out). The catalysed reaction is L-glutamine(in) + Na(+)(in) = L-glutamine(out) + Na(+)(out). It catalyses the reaction glycine(in) + Na(+)(in) = glycine(out) + Na(+)(out). The enzyme catalyses L-isoleucine(in) + Na(+)(in) = L-isoleucine(out) + Na(+)(out). It carries out the reaction L-leucine(in) + Na(+)(in) = L-leucine(out) + Na(+)(out). The catalysed reaction is L-methionine(in) + Na(+)(in) = L-methionine(out) + Na(+)(out). It catalyses the reaction L-phenylalanine(in) + Na(+)(in) = L-phenylalanine(out) + Na(+)(out). The enzyme catalyses L-serine(in) + Na(+)(in) = L-serine(out) + Na(+)(out). It carries out the reaction L-tryptophan(in) + Na(+)(in) = L-tryptophan(out) + Na(+)(out). The catalysed reaction is L-tyrosine(in) + Na(+)(in) = L-tyrosine(out) + Na(+)(out). It catalyses the reaction L-valine(in) + Na(+)(in) = L-valine(out) + Na(+)(out). Functionally, transporter that mediates resorption of neutral amino acids across the apical membrane of renal and intestinal epithelial cells. This uptake is sodium-dependent and chloride-independent. Requires CLTRN in kidney or ACE2 in intestine for cell surface expression and amino acid transporter activity. The protein is Sodium-dependent neutral amino acid transporter B(0)AT1 (SLC6A19) of Pongo abelii (Sumatran orangutan).